The chain runs to 225 residues: uncharacterized protein (225 aa).

4 helical membrane passes run 40–60 (LISL…LSIV), 63–83 (LAFF…PFSF), 151–171 (LSET…LTIL), and 176–196 (IFSL…IVSL).

The protein localises to the membrane. This is an uncharacterized protein from Saccharomyces cerevisiae (strain ATCC 204508 / S288c) (Baker's yeast).